A 152-amino-acid chain; its full sequence is Protein FERTILITY RESTORER RF2, mitochondrial (152 aa).

Residues 1–52 (MSTLVTCSLPGAVTTHASTRRFGGSQFQTSQASCISFKREVSAKAVLRSVRC) constitute a mitochondrion transit peptide. The span at 52–69 (CNATQTQSAQRKSSTATV) shows a compositional bias: polar residues. The tract at residues 52-101 (CNATQTQSAQRKSSTATVKRSDPKGKTQGPKLDDGSGGFPPFRFGKGGGG) is disordered.

It localises to the mitochondrion. Non-functional allele of the RF2 fertility restorer of rice varieties with LD-type cytoplasmic male sterility (CMS). Non-functional RF2 alleles are found in japonica cultivars Taichung 65 and Nipponbare (AC F1SZ44), and is due to the presence of Thr-78 which replaces Ile-78 in the functional allele. Functional allele is found in the japonica cultivars Fukuyama and Owarihatamochi (AC F1SZ42), and indica cultivar Kasalath (AC F1SZ41). The chain is Protein FERTILITY RESTORER RF2, mitochondrial from Oryza sativa subsp. japonica (Rice).